The following is a 220-amino-acid chain: Regulatory protein VanRB (220 aa).

Positions 4-117 constitute a Response regulatory domain; the sequence is RILLVEDDDH…ILLKRVEALL (114 aa). D53 is subject to 4-aspartylphosphate. The segment at residues 124–218 is a DNA-binding region (ompR/PhoB-type); that stretch reads AKEFRVGRLT…IRGVGYRLEE (95 aa).

May be phosphorylated by VanSB. May also be dephosphorylated by VanSB.

The protein resides in the cytoplasm. Member of the two-component regulatory system VanSB/VanRB. Activates the transcription of vanSB, vanYB and vanW in response to vancomycin which results in vancomycin resistance. This Enterococcus faecalis (strain ATCC 700802 / V583) protein is Regulatory protein VanRB (vanRB).